Reading from the N-terminus, the 622-residue chain is Dehydrogenase mpl7 (622 aa).

Residues 23 to 24, 44 to 45, and 102 to 105 contribute to the FAD site; these read TA, EA, and NFMS. The active-site Proton acceptor is the histidine 554. Residues alanine 582 and 593–594 contribute to the FAD site; that span reads IM.

Belongs to the GMC oxidoreductase family. As to quaternary structure, homodimer. The cofactor is FAD.

The protein operates within mycotoxin biosynthesis. In terms of biological role, dehydrogenase; part of the gene cluster that mediates the biosynthesis of the mycotoxin citrinin, a hepato-nephrotoxic compound to humans due to inhibition of respiration complex III. The pathway begins with the synthesis of a keto-aldehyde intermediate by the citrinin PKS (pksCT) from successive condensations of 4 malonyl-CoA units, presumably with a simple acetyl-CoA starter unit. Release of the keto-aldehyde intermediate is consistent with the presence of the C-terminal reductive release domain. Mp11 collaborates with pksCT by catalyzing the hydrolysis of ACP-bound acyl intermediates to free the ACP from stalled intermediates. Mpl2 then catalyzes the oxidation of the C-12 methyl of the ketone intermediate to an alcohol intermediate which is further oxidized by the oxidoreductase mpl7 to produce a bisaldehyde intermediate. The fourth catalytic step is catalyzed by the mpl4 aldehyde dehydrogenase. The final transformation is the reduction of C-3 by mpl6 to provide the chemically stable citrinin nucleus. In Monascus purpureus (Red mold), this protein is Dehydrogenase mpl7.